Consider the following 360-residue polypeptide: Peptide chain release factor 1 (360 aa).

Glutamine 236 bears the N5-methylglutamine mark. The disordered stretch occupies residues 288-308 (QDEQDAERKSTIGTGDRSERI). The segment covering 293 to 308 (AERKSTIGTGDRSERI) has biased composition (basic and acidic residues).

The protein belongs to the prokaryotic/mitochondrial release factor family. Methylated by PrmC. Methylation increases the termination efficiency of RF1.

It is found in the cytoplasm. Its function is as follows. Peptide chain release factor 1 directs the termination of translation in response to the peptide chain termination codons UAG and UAA. This Streptococcus equi subsp. zooepidemicus (strain H70) protein is Peptide chain release factor 1.